Reading from the N-terminus, the 203-residue chain is A-type ATP synthase subunit E (203 aa).

This sequence belongs to the V-ATPase E subunit family. Has multiple subunits with at least A(3), B(3), C, D, E, F, H, I and proteolipid K(x).

The protein localises to the cell membrane. In terms of biological role, component of the A-type ATP synthase that produces ATP from ADP in the presence of a proton gradient across the membrane. In Thermococcus sibiricus (strain DSM 12597 / MM 739), this protein is A-type ATP synthase subunit E.